Consider the following 509-residue polypeptide: ATP synthase subunit alpha (509 aa).

Gly169–Thr176 contributes to the ATP binding site.

The protein belongs to the ATPase alpha/beta chains family. F-type ATPases have 2 components, CF(1) - the catalytic core - and CF(0) - the membrane proton channel. CF(1) has five subunits: alpha(3), beta(3), gamma(1), delta(1), epsilon(1). CF(0) has three main subunits: a(1), b(2) and c(9-12). The alpha and beta chains form an alternating ring which encloses part of the gamma chain. CF(1) is attached to CF(0) by a central stalk formed by the gamma and epsilon chains, while a peripheral stalk is formed by the delta and b chains.

The protein localises to the cell inner membrane. The enzyme catalyses ATP + H2O + 4 H(+)(in) = ADP + phosphate + 5 H(+)(out). Functionally, produces ATP from ADP in the presence of a proton gradient across the membrane. The alpha chain is a regulatory subunit. In Brucella melitensis biotype 1 (strain ATCC 23456 / CCUG 17765 / NCTC 10094 / 16M), this protein is ATP synthase subunit alpha.